The chain runs to 321 residues: Methyltransferase cfoB (321 aa).

It belongs to the methyltransferase superfamily.

It functions in the pathway secondary metabolite biosynthesis; flavonoid biosynthesis. Methyltransferase; part of the gene cluster that mediates the biosynthesis of chlorflavonin, a fungal flavonoid with acetolactate synthase inhibitory activity. Within the pathway, cfoB is responsible for the methylation at position C7-OH of flavonoid. The pathway begins with the PKS-NRPS hybrid synthetase cfoA that uses benzoic acid or p-hydroxybenzoic acid as a starter unit with four rounds of chain elongation using malonyl-CoA to form the chalcone skeleton. Then, a new type of chalcone isomerase, cfoK, catalyzes the conversion of the chalcone into a flavanone by a histidine-mediated oxa-Michael addition mechanism. The desaturation of flavanone to flavone is catalyzed by a new type of flavone synthase, the flavin mononucleotide (FMN)-dependent oxidoreductase cfoJ. Monooxygenases cfoF, cfoG, and P450 cfoH are responsible for the hydroxylation of the flavonoid skeleton at sites C3, C8, and C2', respectively. Like cfoF, the dehydratase cfoI also plays a role in the hydroxylation of position C3. Methyltransferases cfoB, cfoC, and cfoD then catalyze the methylation of C7-OH, C8-OH, and C3-OH, respectively. Finally, the monooxygenase cfoE is responsible for the chlorination of flavonoid at position C3'. The protein is Methyltransferase cfoB of Aspergillus candidus.